A 46-amino-acid chain; its full sequence is Large ribosomal subunit protein bL34 (46 aa).

It belongs to the bacterial ribosomal protein bL34 family.

The sequence is that of Large ribosomal subunit protein bL34 (rpmH) from Mycobacterium avium.